The chain runs to 1529 residues: uncharacterized protein (1529 aa).

The segment covering 1–11 (MDKNNNNNNSN) has biased composition (low complexity). Disordered stretches follow at residues 1 to 85 (MDKN…SKGV), 335 to 371 (LLSNGGGISTSEPEISPSTSPLTGTTPTSPSSSWSSS), 660 to 694 (LPNLTNSISSPSHSSSSSSSTTTNINNSNNNTATA), 798 to 843 (NCNI…SSYS), 1016 to 1035 (SSLPISQNLSDDSSNTNTNN), 1334 to 1364 (QQQQQQPQQQSSQPQQQSSQPQQIPQSQLQQ), and 1454 to 1497 (QQQV…SRLP). Residues 24 to 42 (QKRVQNPSFSSGQSRTVPS) show a composition bias toward polar residues. The segment covering 51 to 79 (ISSSSSSSSISTTNNTTTTTTSGTGSTSS) has biased composition (low complexity). Positions 810 to 833 (NNNNNNNNNNNNNNNNNNNNNNNN) are enriched in low complexity. Polar residues-rich tracts occupy residues 834-843 (VLPRSNSSYS) and 1016-1027 (SSLPISQNLSDD). The span at 1454 to 1494 (QQQVQTPSSPQTLASLLGNSSSNTLTSSSSTLSLNESSTLS) shows a compositional bias: low complexity.

This is an uncharacterized protein from Dictyostelium discoideum (Social amoeba).